Here is a 439-residue protein sequence, read N- to C-terminus: Putative FBD-associated F-box protein At1g05080 (439 aa).

The F-box domain maps to 12–58; that stretch reads EDRISVLPEDLLVVILDLLPTKDVVATMILSKRWLSIWTMVRTLEYT. The FBD domain occupies 360-410; sequence SWKQPSHVPECLSSQLEIFEWRDYGDRIIEEEFLTYVLANSKRLKTATISL.

This is Putative FBD-associated F-box protein At1g05080 from Arabidopsis thaliana (Mouse-ear cress).